Here is an 82-residue protein sequence, read N- to C-terminus: Cysteine proteinase inhibitor A (82 aa).

This sequence belongs to the cystatin family.

Its function is as follows. Strong inhibitor of papain and ficin but poor inhibitor of cathepsin H, B and L. The protein is Cysteine proteinase inhibitor A of Helianthus annuus (Common sunflower).